The sequence spans 215 residues: Glycerol-3-phosphate acyltransferase (215 aa).

The next 5 helical transmembrane spans lie at 1–21, 57–77, 85–105, 126–146, and 165–185; these read MAFLISALLILIGYLLGSIPT, IFVLTVDLAKAMLAVILVKLW, MIPLEWKSWLVVFAAIAAVLG, VLLVLNPIVALGTLGSFLAML, and VLMFGLHQPLPYCLFGVIVGL.

It belongs to the PlsY family. As to quaternary structure, probably interacts with PlsX.

The protein resides in the cell inner membrane. It catalyses the reaction an acyl phosphate + sn-glycerol 3-phosphate = a 1-acyl-sn-glycero-3-phosphate + phosphate. It functions in the pathway lipid metabolism; phospholipid metabolism. Functionally, catalyzes the transfer of an acyl group from acyl-phosphate (acyl-PO(4)) to glycerol-3-phosphate (G3P) to form lysophosphatidic acid (LPA). This enzyme utilizes acyl-phosphate as fatty acyl donor, but not acyl-CoA or acyl-ACP. The polypeptide is Glycerol-3-phosphate acyltransferase (Crocosphaera subtropica (strain ATCC 51142 / BH68) (Cyanothece sp. (strain ATCC 51142))).